We begin with the raw amino-acid sequence, 310 residues long: Junctional adhesion molecule C (310 aa).

Positions 1–29 (MALSRRLRLRLYARLPDFFLLLLFRGCMI) are cleaved as a signal peptide. Topologically, residues 30-241 (EAVNLKSSNR…GQDMEVYDLN (212 aa)) are extracellular. Residues 35-127 (KSSNRNPVVH…VALNDRKEVD (93 aa)) enclose the Ig-like V-type domain. Disulfide bonds link Cys-53–Cys-115 and Cys-160–Cys-219. Residues Asn-104 and Asn-192 are each glycosylated (N-linked (GlcNAc...) asparagine). The Ig-like C2-type domain maps to 139-236 (PVTPVCRIPA…AARCEGQDME (98 aa)). The chain crosses the membrane as a helical span at residues 242–262 (IAGIIGGVLVVLIVLAVITMG). Residues 263–310 (ICCAYRRGCFISSKQDGESYKSPGKHDGVNYIRTSEEGDFRHKSSFVI) are Cytoplasmic-facing. 2 S-palmitoyl cysteine lipidation sites follow: Cys-264 and Cys-265.

This sequence belongs to the immunoglobulin superfamily. Interacts with ITGAM. Interacts with GORASP2. Post-translationally, proteolytically cleaved from endothelial cells surface into a soluble form by ADAM10 and ADAM17; the release of soluble JAM3 is increased by pro-inflammatory factors. N-glycosylated. In terms of processing, S-palmitoylated by ZDHHC7. S-palmitoylation promotes expression at tight junctions. In terms of tissue distribution, colocalizes with Jam2 near the lumen of seminiferous tubulues. Detected at junctional plaques that correspond to cell-cell contacts between spermatids and Sertoli cells. Detected on endothelial cells, in brain vessels and kidney glomeruli (at protein level). Detected in heart, lung, liver, kidney, testis, thymus, lymph node and Peyer patch. Endothelial cells.

Its subcellular location is the cell membrane. The protein localises to the cell junction. It is found in the desmosome. It localises to the tight junction. The protein resides in the secreted. Its function is as follows. Junctional adhesion protein that mediates heterotypic cell-cell interactions with its cognate receptor JAM2 to regulate different cellular processes. Plays a role in homing and mobilization of hematopoietic stem and progenitor cells within the bone marrow. At the surface of bone marrow stromal cells, it contributes to the retention of the hematopoietic stem and progenitor cells expressing JAM3. Plays a central role in leukocytes extravasation by facilitating transmigration through the endothelium. Plays a role in spermatogenesis where JAM2 and JAM3, which are respectively expressed by Sertoli and germ cells, mediate an interaction between both cell types and play an essential role in the anchorage of germ cells onto Sertoli cells and the assembly of cell polarity complexes during spermatid differentiation. Also functions as a counter-receptor for ITGAM, mediating leukocyte-platelet interactions and is involved in the regulation of transepithelial migration of polymorphonuclear neutrophils (PMN). Plays a role in angiogenesis. Plays a role in the regulation of cell migration. During myogenesis, it is involved in myocyte fusion. In terms of biological role, promotes chemotaxis of vascular endothelial cells and stimulates angiogenesis. The polypeptide is Junctional adhesion molecule C (Jam3) (Mus musculus (Mouse)).